We begin with the raw amino-acid sequence, 288 residues long: MSRLRALLGLGLLVAGSRVPRIKSQTIACRSGPTWWGPQRLNSGGRWDSEVMASTVVKYLSQEEAQAVDQELFNEYQFSVDQLMELAGLSCATAIAKAYPPTSMSRSPPTVLVICGPGNNGGDGLVCARHLKLFGYEPTIYYPKRPNKPLFTALVTQCQKMDIPFLGEMPAEPMTIDELYELVVDAIFGFSFKGDVREPFHSILSVLKGLTVPIASIDIPSGWDVEKGNAGGIQPDLLISLTAPKKSATQFTGRYHYLGGRFVPPALEKKYQLNLPPYPDTECVYRLQ.

Residues 1-47 constitute a mitochondrion transit peptide; sequence MSRLRALLGLGLLVAGSRVPRIKSQTIACRSGPTWWGPQRLNSGGRW. At serine 49 the chain carries Phosphoserine. In terms of domain architecture, YjeF N-terminal spans 65–275; sequence AQAVDQELFN…ALEKKYQLNL (211 aa). Residue 119-123 coordinates (6S)-NADPHX; it reads NNGGD. Position 120 (asparagine 120) interacts with K(+). An N6-succinyllysine modification is found at lysine 144. Aspartate 185 provides a ligand contact to K(+). (6S)-NADPHX-binding positions include 189–195 and aspartate 218; that span reads GFSFKGD. Serine 221 contacts K(+).

Belongs to the NnrE/AIBP family. Homodimer. Interacts with APOA1 and APOA2. It depends on K(+) as a cofactor. Undergoes physiological phosphorylation during sperm capacitation, downstream to PKA activation. As to expression, ubiquitously expressed, with highest levels in kidney, heart and liver. Present in cerebrospinal fluid and urine but not in serum from healthy patients. Present in serum of sepsis patients (at protein level).

The protein localises to the mitochondrion. Its subcellular location is the secreted. The enzyme catalyses (6R)-NADHX = (6S)-NADHX. It catalyses the reaction (6R)-NADPHX = (6S)-NADPHX. Catalyzes the epimerization of the S- and R-forms of NAD(P)HX, a damaged form of NAD(P)H that is a result of enzymatic or heat-dependent hydration. This is a prerequisite for the S-specific NAD(P)H-hydrate dehydratase to allow the repair of both epimers of NAD(P)HX. Accelerates cholesterol efflux from endothelial cells to high-density lipoprotein (HDL) and thereby regulates angiogenesis. The chain is NAD(P)H-hydrate epimerase from Homo sapiens (Human).